The primary structure comprises 104 residues: Large ribosomal subunit protein uL24 (104 aa).

The protein belongs to the universal ribosomal protein uL24 family. As to quaternary structure, part of the 50S ribosomal subunit.

In terms of biological role, one of two assembly initiator proteins, it binds directly to the 5'-end of the 23S rRNA, where it nucleates assembly of the 50S subunit. One of the proteins that surrounds the polypeptide exit tunnel on the outside of the subunit. This Pseudomonas fluorescens (strain Pf0-1) protein is Large ribosomal subunit protein uL24.